Consider the following 329-residue polypeptide: Legumin type B (329 aa).

Disordered regions lie at residues 47 to 79 (PETQEEQQERHQQKHSLPVGRRGGQHQQEEDGN) and 97 to 149 (EEDT…GRNG). Basic and acidic residues predominate over residues 99–112 (DTAKRLRSPRDKRN). Residues 129 to 138 (QQEEEEEEEE) show a composition bias toward acidic residues. Residues 161–308 (ENIAQPARAD…AFGLRQRQVT (148 aa)) enclose the Cupin type-1 domain.

This sequence belongs to the 11S seed storage protein (globulins) family. Hexamer; each subunit is composed of an acidic and a basic chain derived from a single precursor and linked by a disulfide bond.

Its function is as follows. This protein found in the seeds of many leguminous and non-leguminous plants is the source of sulfur-containing amino acids in seed meals. This Vicia faba (Broad bean) protein is Legumin type B (LEB6).